A 571-amino-acid polypeptide reads, in one-letter code: MRASRFLFATLRETPNDAEVISHQLMLRAGMIRKLASGLYTWLPMGTRVLKKVDAIVREEMNRSGAMEVFMPVTQPASLWEESGRYEQYGPELLRFKDRHDNPFVLGPTHEEVITDLARNELKSYKQLPVNFYQIQTKFRDEIRPRFGVMRSREFIMKDAYSFHATQESLQETYDVMYDTYSRIFTRLGLDFRPVQADTGSIGGSASHEFHVLAASGEDDIAFSTESDYAANVEMAEAVLVGERAAPTQEFKLVETPNQKTIADVCQFLNADPKQSVKALLVQGVADEKGNVPVVALFLRGDHELNEIKAEKHPLVAAPLAFATEEQLQAFGLTAGFTGPQGLVEKGITVIVDRAASVLSDFVAGANEADKHAVGVNWERDAQITEVFDLRNVVEGDPSPDGKGTLQIKRGIEVGHIFQLGTKYSEALGCKVLGEDGKPFTVTMGCYGIGVTRVVAAAIEQNYDDKGIIWPQAIAPFEIAIVPMNAHKSPRTLEAAEALYAELQAQGFDVLLDDRNERPGVKFSDLELMGIPHRIVIGEKGLDAGTFEYKGRRDAEASNLTKEELLAKLAR.

Belongs to the class-II aminoacyl-tRNA synthetase family. ProS type 1 subfamily. As to quaternary structure, homodimer.

The protein resides in the cytoplasm. It catalyses the reaction tRNA(Pro) + L-proline + ATP = L-prolyl-tRNA(Pro) + AMP + diphosphate. In terms of biological role, catalyzes the attachment of proline to tRNA(Pro) in a two-step reaction: proline is first activated by ATP to form Pro-AMP and then transferred to the acceptor end of tRNA(Pro). As ProRS can inadvertently accommodate and process non-cognate amino acids such as alanine and cysteine, to avoid such errors it has two additional distinct editing activities against alanine. One activity is designated as 'pretransfer' editing and involves the tRNA(Pro)-independent hydrolysis of activated Ala-AMP. The other activity is designated 'posttransfer' editing and involves deacylation of mischarged Ala-tRNA(Pro). The misacylated Cys-tRNA(Pro) is not edited by ProRS. This Acinetobacter baumannii (strain ATCC 17978 / DSM 105126 / CIP 53.77 / LMG 1025 / NCDC KC755 / 5377) protein is Proline--tRNA ligase.